Consider the following 708-residue polypeptide: tRNA 5-methylaminomethyl-2-thiouridine biosynthesis bifunctional protein MnmC (708 aa).

The segment at 1-278 (MTAEPNKPCQ…ERQVLRQQDA (278 aa)) is tRNA (mnm(5)s(2)U34)-methyltransferase. The segment at 301 to 708 (IGGGLASAHL…LRKLLKGKAL (408 aa)) is FAD-dependent cmnm(5)s(2)U34 oxidoreductase.

It in the N-terminal section; belongs to the methyltransferase superfamily. tRNA (mnm(5)s(2)U34)-methyltransferase family. This sequence in the C-terminal section; belongs to the DAO family. Requires FAD as cofactor.

The protein localises to the cytoplasm. The enzyme catalyses 5-aminomethyl-2-thiouridine(34) in tRNA + S-adenosyl-L-methionine = 5-methylaminomethyl-2-thiouridine(34) in tRNA + S-adenosyl-L-homocysteine + H(+). Catalyzes the last two steps in the biosynthesis of 5-methylaminomethyl-2-thiouridine (mnm(5)s(2)U) at the wobble position (U34) in tRNA. Catalyzes the FAD-dependent demodification of cmnm(5)s(2)U34 to nm(5)s(2)U34, followed by the transfer of a methyl group from S-adenosyl-L-methionine to nm(5)s(2)U34, to form mnm(5)s(2)U34. The sequence is that of tRNA 5-methylaminomethyl-2-thiouridine biosynthesis bifunctional protein MnmC from Shewanella baltica (strain OS195).